Reading from the N-terminus, the 475-residue chain is AAA-ATPase At1g43910 (475 aa).

A helical membrane pass occupies residues 11 to 28 (VSAVFSLYTSFSAITMLF). Phosphothreonine is present on threonine 85. An ATP-binding site is contributed by 246–253 (GPPGTGKS). 2 disordered regions span residues 306-328 (SRRR…PQKR) and 453-475 (KGED…EAET). Residues 457-467 (SSVEEEGEIED) show a composition bias toward acidic residues.

This sequence belongs to the AAA ATPase family. BCS1 subfamily. Mg(2+) is required as a cofactor. In terms of tissue distribution, expressed in developing shoots.

The protein localises to the membrane. The enzyme catalyses ATP + H2O = ADP + phosphate + H(+). This Arabidopsis thaliana (Mouse-ear cress) protein is AAA-ATPase At1g43910.